A 179-amino-acid polypeptide reads, in one-letter code: Shikimate kinase (179 aa).

15-20 serves as a coordination point for ATP; it reads GAGKTS. Residue Thr-19 participates in Mg(2+) binding. Substrate is bound by residues Asp-37, Arg-61, and Gly-83. Residue Arg-123 participates in ATP binding. Position 142 (Arg-142) interacts with substrate.

This sequence belongs to the shikimate kinase family. In terms of assembly, monomer. The cofactor is Mg(2+).

The protein localises to the cytoplasm. It catalyses the reaction shikimate + ATP = 3-phosphoshikimate + ADP + H(+). The protein operates within metabolic intermediate biosynthesis; chorismate biosynthesis; chorismate from D-erythrose 4-phosphate and phosphoenolpyruvate: step 5/7. Functionally, catalyzes the specific phosphorylation of the 3-hydroxyl group of shikimic acid using ATP as a cosubstrate. This is Shikimate kinase from Coxiella burnetii (strain CbuG_Q212) (Coxiella burnetii (strain Q212)).